The following is a 257-amino-acid chain: Small ribosomal subunit protein uS4c (257 aa).

S4 RNA-binding domains lie at 110-170 and 189-255; these read MRLD…QLVN and KTLP…KNYL.

This sequence belongs to the universal ribosomal protein uS4 family. As to quaternary structure, part of the 30S ribosomal subunit. Contacts protein S5. The interaction surface between S4 and S5 is involved in control of translational fidelity.

It localises to the plastid. Its subcellular location is the chloroplast. One of the primary rRNA binding proteins, it binds directly to 16S rRNA where it nucleates assembly of the body of the 30S subunit. Its function is as follows. With S5 and S12 plays an important role in translational accuracy. This Chlamydomonas reinhardtii (Chlamydomonas smithii) protein is Small ribosomal subunit protein uS4c (rps4).